A 330-amino-acid chain; its full sequence is tRNA(Ile)-lysidine synthase (330 aa).

31 to 36 (SGGQDS) serves as a coordination point for ATP.

Belongs to the tRNA(Ile)-lysidine synthase family.

Its subcellular location is the cytoplasm. It catalyses the reaction cytidine(34) in tRNA(Ile2) + L-lysine + ATP = lysidine(34) in tRNA(Ile2) + AMP + diphosphate + H(+). Ligates lysine onto the cytidine present at position 34 of the AUA codon-specific tRNA(Ile) that contains the anticodon CAU, in an ATP-dependent manner. Cytidine is converted to lysidine, thus changing the amino acid specificity of the tRNA from methionine to isoleucine. The chain is tRNA(Ile)-lysidine synthase from Synechocystis sp. (strain ATCC 27184 / PCC 6803 / Kazusa).